The primary structure comprises 234 residues: Sugar fermentation stimulation protein homolog (234 aa).

The protein belongs to the SfsA family.

This chain is Sugar fermentation stimulation protein homolog, found in Pectobacterium atrosepticum (strain SCRI 1043 / ATCC BAA-672) (Erwinia carotovora subsp. atroseptica).